A 97-amino-acid chain; its full sequence is MNKKFSISLLSTILAFLLVLGCDLSSNNAENKMDDIFNLEKKYMDNSNYKCLSKNEAIVKNSKIKLGVNNTRSRSYSSRETNVSDSYNKTYSYCKSN.

The signal sequence occupies residues 1 to 21 (MNKKFSISLLSTILAFLLVLG). C22 carries the N-palmitoyl cysteine lipid modification. The S-diacylglycerol cysteine moiety is linked to residue C22.

The protein to B.burgdorferi BBD15.

Its subcellular location is the cell membrane. This is an uncharacterized protein from Borreliella burgdorferi (strain ATCC 35210 / DSM 4680 / CIP 102532 / B31) (Borrelia burgdorferi).